The following is a 203-amino-acid chain: Guanylate kinase (203 aa).

In terms of domain architecture, Guanylate kinase-like spans 5–184 (GMLIVLSGPS…AVQRIEKIIE (180 aa)). 12 to 19 (GPSGVGKG) lines the ATP pocket.

The protein belongs to the guanylate kinase family.

It is found in the cytoplasm. The enzyme catalyses GMP + ATP = GDP + ADP. Its function is as follows. Essential for recycling GMP and indirectly, cGMP. This chain is Guanylate kinase, found in Latilactobacillus sakei subsp. sakei (strain 23K) (Lactobacillus sakei subsp. sakei).